A 484-amino-acid polypeptide reads, in one-letter code: NADH-quinone oxidoreductase subunit N (484 aa).

14 helical membrane-spanning segments follow: residues 11 to 31, 42 to 62, 79 to 98, 113 to 133, 134 to 154, 167 to 187, 211 to 231, 248 to 268, 279 to 299, 313 to 333, 335 to 355, 378 to 398, 408 to 428, and 457 to 477; these read SLWI…VLLI, VTYY…FNLI, MASV…MVYS, FVLV…YSLL, TLYL…AIAR, FVLG…IYGI, LIIN…LGAV, VTLF…VRIL, WSDL…VVAL, ISHV…GYGA, AFYM…IILL, FALM…LVGF, VVSA…VISA, and LVLS…DFWM.

This sequence belongs to the complex I subunit 2 family. As to quaternary structure, NDH-1 is composed of 14 different subunits. Subunits NuoA, H, J, K, L, M, N constitute the membrane sector of the complex.

Its subcellular location is the cell inner membrane. It catalyses the reaction a quinone + NADH + 5 H(+)(in) = a quinol + NAD(+) + 4 H(+)(out). Functionally, NDH-1 shuttles electrons from NADH, via FMN and iron-sulfur (Fe-S) centers, to quinones in the respiratory chain. The immediate electron acceptor for the enzyme in this species is believed to be ubiquinone. Couples the redox reaction to proton translocation (for every two electrons transferred, four hydrogen ions are translocated across the cytoplasmic membrane), and thus conserves the redox energy in a proton gradient. The sequence is that of NADH-quinone oxidoreductase subunit N from Ruthia magnifica subsp. Calyptogena magnifica.